Here is a 467-residue protein sequence, read N- to C-terminus: Acyl-CoA-binding domain-containing protein 5 (467 aa).

The 90-residue stretch at 8–97 (HQTRFEAAVS…MKKIIETMPV (90 aa)) folds into the ACB domain. An acyl-CoA is bound by residues 19–28 (IQSLPKNGSF), 39–43 (YSFYK), Lys65, and Tyr84. Disordered regions lie at residues 119 to 204 (KHGR…IVLN), 219 to 240 (TPLPTKCLSEPGDNVAIPEGEP), and 304 to 376 (ITEN…DRGP). Residues 125-139 (GVTSELGSVLTSTPN) are compositionally biased toward polar residues. Residues 170-187 (DEEDEEDETEHSEEEEKE) are compositionally biased toward acidic residues. Basic and acidic residues-rich tracts occupy residues 312–322 (ELKDGGEDGKQ) and 335–347 (KSEHFSSRRERSL). Gly residues predominate over residues 352–372 (GGEGSRSGQIGSSGDGDGWGS). Residues 382-411 (EQIAVVLMRLQEDMQNVLQRLHSLEVQTAS) adopt a coiled-coil conformation. The helical transmembrane segment at 439-459 (GTLALAVVWPFVVHWLMHVFL) threads the bilayer.

Belongs to the ATG37 family.

The protein resides in the peroxisome membrane. Functionally, acyl-CoA binding protein which acts as the peroxisome receptor for pexophagy but is dispensable for aggrephagy and nonselective autophagy. Binds medium- and long-chain acyl-CoA esters. This Xenopus laevis (African clawed frog) protein is Acyl-CoA-binding domain-containing protein 5 (acbd5).